The primary structure comprises 187 residues: Benzene 1,2-dioxygenase subunit beta (187 aa).

Belongs to the bacterial ring-hydroxylating dioxygenase beta subunit family. This dioxygenase system consists of four proteins: the two subunits of the hydroxylase component (BnzA and BnzB), a ferredoxin (BnzC) and a ferredoxin reductase (BnzD). The cofactor is [2Fe-2S] cluster. Fe cation is required as a cofactor.

It carries out the reaction benzene + NADH + O2 + H(+) = cis-1,2-dihydrobenzene-1,2-diol + NAD(+). The catalysed reaction is toluene + NADH + O2 + H(+) = (1S,2R)-3-methylcyclohexa-3,5-diene-1,2-diol + NAD(+). Its pathway is aromatic compound metabolism; benzene degradation; catechol from benzene: step 1/2. It functions in the pathway xenobiotic degradation; toluene degradation. The protein operates within xenobiotic degradation; xylene degradation. Catalyzes both the oxidation of benzene and toluene. The beta subunit may be responsible for the substrate specificity of the enzyme. This chain is Benzene 1,2-dioxygenase subunit beta (bnzB), found in Pseudomonas putida (strain ATCC 700007 / DSM 6899 / JCM 31910 / BCRC 17059 / LMG 24140 / F1).